A 196-amino-acid chain; its full sequence is MARTAEVVRETKETQIRVWIDLDGTGVSTISTGIGFYDHMLESFARHGGFDLKVETKGDLHIDMHHTVEDTGIVLGQAIHKALDGFKGIRRFGSAYIPMDETLTRCAIDLSNRPYLIWKVEFKRPKVGEMDTELFKEFHHAFAMNSGACIHLETLYGDNTHHVAESGFKALARALRQAVEIDPKTGGQAPSTKGVL.

It belongs to the imidazoleglycerol-phosphate dehydratase family.

The protein localises to the cytoplasm. It catalyses the reaction D-erythro-1-(imidazol-4-yl)glycerol 3-phosphate = 3-(imidazol-4-yl)-2-oxopropyl phosphate + H2O. The protein operates within amino-acid biosynthesis; L-histidine biosynthesis; L-histidine from 5-phospho-alpha-D-ribose 1-diphosphate: step 6/9. The polypeptide is Imidazoleglycerol-phosphate dehydratase (Caulobacter vibrioides (strain ATCC 19089 / CIP 103742 / CB 15) (Caulobacter crescentus)).